Reading from the N-terminus, the 594-residue chain is Aspartate--tRNA ligase (594 aa).

Residue E171 coordinates L-aspartate. Residues 195–198 are aspartate; that stretch reads QLFK. R217 is a binding site for L-aspartate. Residues 217–219 and Q226 contribute to the ATP site; that span reads RDE. Residue H449 coordinates L-aspartate. E483 serves as a coordination point for ATP. Position 490 (R490) interacts with L-aspartate. 535 to 538 is an ATP binding site; it reads GLDR.

It belongs to the class-II aminoacyl-tRNA synthetase family. Type 1 subfamily. In terms of assembly, homodimer.

It localises to the cytoplasm. The catalysed reaction is tRNA(Asp) + L-aspartate + ATP = L-aspartyl-tRNA(Asp) + AMP + diphosphate. Functionally, catalyzes the attachment of L-aspartate to tRNA(Asp) in a two-step reaction: L-aspartate is first activated by ATP to form Asp-AMP and then transferred to the acceptor end of tRNA(Asp). This chain is Aspartate--tRNA ligase, found in Proteus mirabilis (strain HI4320).